The chain runs to 341 residues: Probable long-chain-alcohol O-fatty-acyltransferase 1 (341 aa).

8 consecutive transmembrane segments (helical) span residues 7–27, 36–56, 58–78, 120–140, 149–169, 233–253, 261–281, and 293–313; these read NLIE…YISS, LLSI…LSCV, FCAI…LLFA, PMPK…LHVY, FVVL…VLVF, MFAG…LLYF, TWEV…EIAV, and AVSG…LFLA.

This sequence belongs to the wax synthase family.

The protein resides in the membrane. It catalyses the reaction a long chain fatty alcohol + a fatty acyl-CoA = a wax ester + CoA. Functionally, catalyzes the final step in the synthesis of long-chain linear esters (waxes). This Arabidopsis thaliana (Mouse-ear cress) protein is Probable long-chain-alcohol O-fatty-acyltransferase 1 (AT1).